We begin with the raw amino-acid sequence, 461 residues long: Juvenile hormone epoxide hydrolase (461 aa).

Residues 4–24 form a helical membrane-spanning segment; the sequence is LLFIALPLLVLASIPLYLLVL. The Nucleophile role is filled by aspartate 227. Tyrosine 373 acts as the Proton donor in catalysis. The active-site Proton acceptor is histidine 430.

The protein belongs to the peptidase S33 family. Homodimer. In terms of tissue distribution, expressed in fat body, foregut and midgut but not in brain, subesophageal ganglia or silk gland of larvae on day 1 of fifth instar.

It is found in the microsome membrane. The protein localises to the endoplasmic reticulum membrane. It catalyses the reaction cis-stilbene oxide + H2O = (1R,2R)-hydrobenzoin. It carries out the reaction 1-(4-methoxyphenyl)-N-methyl-N-[(3-methyloxetan-3-yl)methyl]methanamine + H2O = 2-{[(4-methoxybenzyl)(methyl)amino]methyl}-2-methylpropane-1,3-diol. Its function is as follows. Catalyzes juvenile hormone hydrolysis. Degrades juvenile hormone III (JH III) about 3 times and 5 times slower than juvenile hormone I (JH I) and II (JH II), respectively. Degrades cis-stilbene oxide and trans-stilbene oxide about 18 and 43 times slower than JH III, respectively. This chain is Juvenile hormone epoxide hydrolase, found in Bombyx mori (Silk moth).